Reading from the N-terminus, the 76-residue chain is Large ribosomal subunit protein bL28 (76 aa).

This sequence belongs to the bacterial ribosomal protein bL28 family.

The protein is Large ribosomal subunit protein bL28 of Opitutus terrae (strain DSM 11246 / JCM 15787 / PB90-1).